A 230-amino-acid chain; its full sequence is Large ribosomal subunit protein uL1 (230 aa).

It belongs to the universal ribosomal protein uL1 family. Part of the 50S ribosomal subunit.

Binds directly to 23S rRNA. The L1 stalk is quite mobile in the ribosome, and is involved in E site tRNA release. Functionally, protein L1 is also a translational repressor protein, it controls the translation of the L11 operon by binding to its mRNA. In Leptospira biflexa serovar Patoc (strain Patoc 1 / Ames), this protein is Large ribosomal subunit protein uL1.